The chain runs to 32 residues: Photosystem II reaction center protein T (32 aa).

The chain crosses the membrane as a helical span at residues 3–23 (ALVYVFLLIGTLMIIFFAIFF).

The protein belongs to the PsbT family. As to quaternary structure, PSII is composed of 1 copy each of membrane proteins PsbA, PsbB, PsbC, PsbD, PsbE, PsbF, PsbH, PsbI, PsbJ, PsbK, PsbL, PsbM, PsbT, PsbY, PsbZ, Psb30/Ycf12, at least 3 peripheral proteins of the oxygen-evolving complex and a large number of cofactors. It forms dimeric complexes.

It localises to the plastid. The protein localises to the chloroplast thylakoid membrane. In terms of biological role, found at the monomer-monomer interface of the photosystem II (PS II) dimer, plays a role in assembly and dimerization of PSII. PSII is a light-driven water plastoquinone oxidoreductase, using light energy to abstract electrons from H(2)O, generating a proton gradient subsequently used for ATP formation. The protein is Photosystem II reaction center protein T of Cyanidioschyzon merolae (strain NIES-3377 / 10D) (Unicellular red alga).